Reading from the N-terminus, the 206-residue chain is MDYPGNLFVVAAPSGAGKSSLVKALMELDSAIQPAVSHTTRPPRGQEKHGREYFFLSPEEFDSMVQRDAFLEWAHVHGHRYGTSRQAIEERIAHGKDVILEIDFQGAINIKRIFSNAVLIFILPPSWEELRSRLQRRGEDSPEVIELRLKNAATEMAQAREFDFVIINELFERAVFDLKTIVHAQRLKFSAQRRARAETFRALQIP.

Positions 5–183 constitute a Guanylate kinase-like domain; that stretch reads GNLFVVAAPS…AVFDLKTIVH (179 aa). Residue 12–19 coordinates ATP; sequence APSGAGKS.

This sequence belongs to the guanylate kinase family.

It is found in the cytoplasm. It catalyses the reaction GMP + ATP = GDP + ADP. In terms of biological role, essential for recycling GMP and indirectly, cGMP. The polypeptide is Guanylate kinase (Polaromonas sp. (strain JS666 / ATCC BAA-500)).